The following is a 255-amino-acid chain: Glycerol-3-phosphate regulon repressor (255 aa).

The 56-residue stretch at Gln-3 to Ser-58 folds into the HTH deoR-type domain. The segment at residues Leu-20–Asp-39 is a DNA-binding region (H-T-H motif).

Repressor of the glycerol-3-phosphate regulon. The chain is Glycerol-3-phosphate regulon repressor (glpR) from Haemophilus influenzae (strain ATCC 51907 / DSM 11121 / KW20 / Rd).